We begin with the raw amino-acid sequence, 211 residues long: Ribonuclease HII (211 aa).

Residues 16-205 (APVCGVDEAG…VKAALAAAAV (190 aa)) enclose the RNase H type-2 domain. Positions 22, 23, and 114 each coordinate a divalent metal cation.

This sequence belongs to the RNase HII family. Mn(2+) is required as a cofactor. It depends on Mg(2+) as a cofactor.

It is found in the cytoplasm. It catalyses the reaction Endonucleolytic cleavage to 5'-phosphomonoester.. Functionally, endonuclease that specifically degrades the RNA of RNA-DNA hybrids. In Caulobacter vibrioides (strain ATCC 19089 / CIP 103742 / CB 15) (Caulobacter crescentus), this protein is Ribonuclease HII (rnhB).